The following is a 336-amino-acid chain: Calcium uniporter protein 3, mitochondrial (336 aa).

The transit peptide at 1–69 directs the protein to the mitochondrion; the sequence is MAMRKLLSKK…RFMHNSAMIR (69 aa). The next 2 membrane-spanning stretches (helical) occupy residues 231 to 251 and 257 to 277; these read LWAG…LTFW and VMEP…YAFF. Positions 255–263 match the Selectivity filter motif; it reads WDVMEPICF. Residue Glu-259 participates in Ca(2+) binding.

The protein belongs to the MCU (TC 1.A.77) family.

It localises to the mitochondrion inner membrane. It catalyses the reaction Ca(2+)(in) = Ca(2+)(out). In terms of biological role, mitochondrial inner membrane calcium uniporter that mediates calcium uptake into mitochondria. Constitutes a pore-forming and calcium-conducting subunit. Mitochondrial calcium homeostasis plays key roles in cellular physiology and regulates cell bioenergetics, cytoplasmic calcium signals and activation of cell death pathways. The polypeptide is Calcium uniporter protein 3, mitochondrial (Arabidopsis thaliana (Mouse-ear cress)).